The chain runs to 483 residues: Uroporphyrinogen-III C-methyltransferase (483 aa).

Belongs to the precorrin methyltransferase family.

The catalysed reaction is uroporphyrinogen III + 2 S-adenosyl-L-methionine = precorrin-2 + 2 S-adenosyl-L-homocysteine + H(+). The protein is Uroporphyrinogen-III C-methyltransferase (nasF) of Bacillus subtilis (strain 168).